The following is a 70-amino-acid chain: Small ribosomal subunit protein bS18c (70 aa).

This sequence belongs to the bacterial ribosomal protein bS18 family. Part of the 30S ribosomal subunit.

It localises to the plastid. The protein localises to the chloroplast. In Gracilaria tenuistipitata var. liui (Red alga), this protein is Small ribosomal subunit protein bS18c.